The chain runs to 73 residues: Ocellatin-PT7 (73 aa).

Residues 1–22 (MAFLKKSLFLVLFLGLVSLSIC) form the signal peptide. Residues 23–39 (DEEKRQDEDDDDDDDEE) constitute a propeptide that is removed on maturation.

As to expression, expressed by the skin glands.

It localises to the secreted. In terms of biological role, has antibacterial activity against Gram-negative bacteria E.coli ATCC 25922 (MIC=60 uM) and S.choleraesuis ATCC 14028 (MIC=240 uM) and against Gram-positive bacterium S.aureus ATCC 29313 (MIC=240 uM). Shows no hemolytic activity and no cytotoxicity. The protein is Ocellatin-PT7 of Leptodactylus pustulatus (Ceara white-lipped frog).